The following is a 141-amino-acid chain: Hemoglobin subunit alpha (141 aa).

The region spanning 1–141 is the Globin domain; that stretch reads VLSAADKANV…VSTVLTSKYR (141 aa). Phosphoserine is present on serine 3. 2 positions are modified to N6-succinyllysine: lysine 7 and lysine 11. Lysine 16 is modified (N6-acetyllysine; alternate). The residue at position 16 (lysine 16) is an N6-succinyllysine; alternate. At lysine 40 the chain carries N6-succinyllysine. Serine 49 carries the post-translational modification Phosphoserine. An O2-binding site is contributed by histidine 58. Histidine 87 contributes to the heme b binding site. Serine 102 is subject to Phosphoserine. The residue at position 108 (threonine 108) is a Phosphothreonine. The residue at position 124 (serine 124) is a Phosphoserine. Phosphothreonine occurs at positions 134 and 137. Position 138 is a phosphoserine (serine 138).

Belongs to the globin family. As to quaternary structure, heterotetramer of two alpha chains and two beta chains. Red blood cells.

Functionally, involved in oxygen transport from the lung to the various peripheral tissues. In terms of biological role, hemopressin acts as an antagonist peptide of the cannabinoid receptor CNR1. Hemopressin-binding efficiently blocks cannabinoid receptor CNR1 and subsequent signaling. The sequence is that of Hemoglobin subunit alpha (HBA) from Sus scrofa (Pig).